The following is a 171-amino-acid chain: Cation channel sperm-associated auxiliary subunit TMEM249 (171 aa).

Residues 1–2 lie on the Cytoplasmic side of the membrane; it reads ML. A helical membrane pass occupies residues 3 to 17; that stretch reads FIICLVFISCNVLRE. The Extracellular portion of the chain corresponds to 18-28; sequence VKYQETWCFPA. A helical transmembrane segment spans residues 29-40; sequence YGMVIGLWLMLS. Topologically, residues 41–171 are cytoplasmic; it reads SIPQRRLVLN…TKSSVNDLDV (131 aa).

Component of the CatSper complex or CatSpermasome composed of the core pore-forming members CATSPER1, CATSPER2, CATSPER3 and CATSPER4 as well as auxiliary members CATSPERB, CATSPERG2, CATSPERD, CATSPERE, CATSPERZ, C2CD6/CATSPERT, SLCO6C1, TMEM249, TMEM262 and EFCAB9. HSPA1 may be an additional auxiliary complex member. The core complex members CATSPER1, CATSPER2, CATSPER3 and CATSPER4 form a heterotetrameric channel. The auxiliary CATSPERB, CATSPERG2, CATSPERD and CATSPERE subunits form a pavilion-like structure over the pore which stabilizes the complex through interactions with CATSPER4, CATSPER3, CATSPER1 and CATSPER2 respectively. SLCO6C1 interacts with CATSPERE and TMEM262/CATSPERH interacts with CATSPERB, further stabilizing the complex. C2CD6/CATSPERT interacts at least with CATSPERD and is required for targeting the CatSper complex in the flagellar membrane.

It is found in the cell projection. The protein localises to the cilium. Its subcellular location is the flagellum membrane. In terms of biological role, auxiliary component of the CatSper complex, a complex involved in sperm cell hyperactivation. The chain is Cation channel sperm-associated auxiliary subunit TMEM249 from Mus musculus (Mouse).